The primary structure comprises 688 residues: Elongation factor G (688 aa).

The tr-type G domain maps to 8-282 (DKFRNFGIMA…GVVDYLPSPL (275 aa)). Residues 17 to 24 (AHIDAGKT), 81 to 85 (DTPGH), and 135 to 138 (NKMD) contribute to the GTP site.

The protein belongs to the TRAFAC class translation factor GTPase superfamily. Classic translation factor GTPase family. EF-G/EF-2 subfamily.

It localises to the cytoplasm. Its function is as follows. Catalyzes the GTP-dependent ribosomal translocation step during translation elongation. During this step, the ribosome changes from the pre-translocational (PRE) to the post-translocational (POST) state as the newly formed A-site-bound peptidyl-tRNA and P-site-bound deacylated tRNA move to the P and E sites, respectively. Catalyzes the coordinated movement of the two tRNA molecules, the mRNA and conformational changes in the ribosome. This chain is Elongation factor G, found in Clostridium beijerinckii (strain ATCC 51743 / NCIMB 8052) (Clostridium acetobutylicum).